We begin with the raw amino-acid sequence, 389 residues long: Vacuolar protein sorting-associated protein vts1 (389 aa).

Residues Asn149–Pro335 form a disordered region. Polar residues-rich tracts occupy residues Thr156–Thr177, Thr184–Pro219, and Ser227–Lys282. Over residues Thr294–Ser306 the composition is skewed to low complexity. The segment covering Ala308–Ser334 has biased composition (polar residues).

It belongs to the VTA1 family. Homodimer (in cytoplasm).

The protein localises to the cytoplasm. It is found in the endosome membrane. Functionally, has a role in the formation of the multivesicular body (MVB). Required for the sorting of lipids to form intralumenal vesicles and for fluid-phase transport to the vacuole. Required for sorting several plasma membrane proteins into the MVB. This is Vacuolar protein sorting-associated protein vts1 (vts1) from Schizosaccharomyces pombe (strain 972 / ATCC 24843) (Fission yeast).